We begin with the raw amino-acid sequence, 434 residues long: Nicotinate phosphoribosyltransferase (434 aa).

A Phosphohistidine; by autocatalysis modification is found at His242.

This sequence belongs to the NAPRTase family. Transiently phosphorylated on a His residue during the reaction cycle. Phosphorylation strongly increases the affinity for substrates and increases the rate of nicotinate D-ribonucleotide production. Dephosphorylation regenerates the low-affinity form of the enzyme, leading to product release.

The enzyme catalyses nicotinate + 5-phospho-alpha-D-ribose 1-diphosphate + ATP + H2O = nicotinate beta-D-ribonucleotide + ADP + phosphate + diphosphate. It participates in cofactor biosynthesis; NAD(+) biosynthesis; nicotinate D-ribonucleotide from nicotinate: step 1/1. Its function is as follows. Catalyzes the synthesis of beta-nicotinate D-ribonucleotide from nicotinate and 5-phospho-D-ribose 1-phosphate at the expense of ATP. This chain is Nicotinate phosphoribosyltransferase, found in Rhizobium etli (strain CIAT 652).